Here is a 107-residue protein sequence, read N- to C-terminus: Phosphoribosyl-ATP pyrophosphatase (107 aa).

Belongs to the PRA-PH family.

The protein localises to the cytoplasm. It catalyses the reaction 1-(5-phospho-beta-D-ribosyl)-ATP + H2O = 1-(5-phospho-beta-D-ribosyl)-5'-AMP + diphosphate + H(+). The protein operates within amino-acid biosynthesis; L-histidine biosynthesis; L-histidine from 5-phospho-alpha-D-ribose 1-diphosphate: step 2/9. The chain is Phosphoribosyl-ATP pyrophosphatase from Bacillus anthracis (strain A0248).